Reading from the N-terminus, the 304-residue chain is MIRQRTLKNTIRATGVGLHTGEKVYVMLRPAPVDTGVVFRRMDLEPPVEIKASPDNVGDTRLSTTLVNGEVRVSTVEHLLSAIAGLGIDNLYVEVSAAEVPIMDGSAGPFVFLIQSAGIVEQEAPKKFIRIKRAVEVREDDKWARFEPFDGFKVGFSIDFQHPIFSNGVQTAELDFSTTSFVKEVSRARTFGFMRDIEMLRERQLALGGSLDNAIVLDDFRILNEDGLRYEDEFVKHKILDAIGDLYLLGHSLVGAFTGFKSGHALNNRLIRTLIAQEDAWECITFEDENESAPISYAQPVTAF.

Positions 78, 237, and 241 each coordinate Zn(2+). The active-site Proton donor is His-264.

This sequence belongs to the LpxC family. The cofactor is Zn(2+).

It carries out the reaction a UDP-3-O-[(3R)-3-hydroxyacyl]-N-acetyl-alpha-D-glucosamine + H2O = a UDP-3-O-[(3R)-3-hydroxyacyl]-alpha-D-glucosamine + acetate. Its pathway is glycolipid biosynthesis; lipid IV(A) biosynthesis; lipid IV(A) from (3R)-3-hydroxytetradecanoyl-[acyl-carrier-protein] and UDP-N-acetyl-alpha-D-glucosamine: step 2/6. In terms of biological role, catalyzes the hydrolysis of UDP-3-O-myristoyl-N-acetylglucosamine to form UDP-3-O-myristoylglucosamine and acetate, the committed step in lipid A biosynthesis. This is UDP-3-O-acyl-N-acetylglucosamine deacetylase from Thioalkalivibrio sulfidiphilus (strain HL-EbGR7).